A 416-amino-acid chain; its full sequence is Pre-mRNA-splicing factor slu-7 (416 aa).

Residues 1–34 (MPPPPPNRREQATAAPSSTDKSETGAGAARKEDN) are disordered. The CCHC-type zinc finger occupies 95–112 (GACENCGAMGHKKKDCLE). Composition is skewed to basic and acidic residues over residues 168–179 (RRALQGDQKTPD) and 188–213 (DDKS…QSMR). The interval 168–213 (RRALQGDQKTPDGEGADGPEDDKSGFKYDEESDMGRDRATTKQSMR) is disordered.

The protein belongs to the SLU7 family. As to quaternary structure, associated with the spliceosome.

The protein resides in the nucleus. Its function is as follows. Involved in pre-mRNA splicing. The chain is Pre-mRNA-splicing factor slu-7 (slu-7) from Neurospora crassa (strain ATCC 24698 / 74-OR23-1A / CBS 708.71 / DSM 1257 / FGSC 987).